A 66-amino-acid chain; its full sequence is Large ribosomal subunit protein bL32 (66 aa).

The protein belongs to the bacterial ribosomal protein bL32 family.

This chain is Large ribosomal subunit protein bL32, found in Acetivibrio thermocellus (strain ATCC 27405 / DSM 1237 / JCM 9322 / NBRC 103400 / NCIMB 10682 / NRRL B-4536 / VPI 7372) (Clostridium thermocellum).